We begin with the raw amino-acid sequence, 209 residues long: Thymidine kinase (209 aa).

ATP contacts are provided by residues 9-16 and 88-91; these read AAMNAGKS and DEAQ. Glu89 serves as the catalytic Proton acceptor. Cys146, Cys148, Cys183, and His186 together coordinate Zn(2+).

The protein belongs to the thymidine kinase family. Homotetramer.

The protein localises to the cytoplasm. It catalyses the reaction thymidine + ATP = dTMP + ADP + H(+). The sequence is that of Thymidine kinase from Legionella pneumophila subsp. pneumophila (strain Philadelphia 1 / ATCC 33152 / DSM 7513).